We begin with the raw amino-acid sequence, 261 residues long: Taurine import ATP-binding protein TauB (261 aa).

The ABC transporter domain occupies 4 to 233; it reads LQLERIGAQY…RYAAGESARA (230 aa). 38–45 is a binding site for ATP; that stretch reads GPSGSGKT.

This sequence belongs to the ABC transporter superfamily. Taurine importer (TC 3.A.1.17.1) family. As to quaternary structure, the complex is composed of two ATP-binding proteins (TauB), two transmembrane proteins (TauC) and a solute-binding protein (TauA).

The protein resides in the cell inner membrane. It carries out the reaction taurine(out) + ATP + H2O = taurine(in) + ADP + phosphate + H(+). Its function is as follows. Part of the ABC transporter complex TauABC involved in taurine import. Responsible for energy coupling to the transport system. The protein is Taurine import ATP-binding protein TauB of Pseudomonas savastanoi pv. phaseolicola (strain 1448A / Race 6) (Pseudomonas syringae pv. phaseolicola (strain 1448A / Race 6)).